The sequence spans 331 residues: ADP-L-glycero-D-manno-heptose-6-epimerase (331 aa).

Residues 11-12 (FI), 32-33 (DN), lysine 39, lysine 54, 75-79 (EGACS), and asparagine 92 contribute to the NADP(+) site. Catalysis depends on tyrosine 139, which acts as the Proton acceptor. Lysine 143 provides a ligand contact to NADP(+). Asparagine 168 is a substrate binding site. Positions 169 and 177 each coordinate NADP(+). The active-site Proton acceptor is the lysine 177. Residues arginine 179, histidine 186, 200 to 203 (FGEY), arginine 213, and tyrosine 292 contribute to the substrate site.

This sequence belongs to the NAD(P)-dependent epimerase/dehydratase family. HldD subfamily. In terms of assembly, homopentamer. NADP(+) serves as cofactor.

The enzyme catalyses ADP-D-glycero-beta-D-manno-heptose = ADP-L-glycero-beta-D-manno-heptose. It participates in nucleotide-sugar biosynthesis; ADP-L-glycero-beta-D-manno-heptose biosynthesis; ADP-L-glycero-beta-D-manno-heptose from D-glycero-beta-D-manno-heptose 7-phosphate: step 4/4. Catalyzes the interconversion between ADP-D-glycero-beta-D-manno-heptose and ADP-L-glycero-beta-D-manno-heptose via an epimerization at carbon 6 of the heptose. The sequence is that of ADP-L-glycero-D-manno-heptose-6-epimerase from Ralstonia nicotianae (strain ATCC BAA-1114 / GMI1000) (Ralstonia solanacearum).